We begin with the raw amino-acid sequence, 187 residues long: MKYINVRGCNGSGKTTLLRCLARDPLCRVINVIVPDHKPIPVTYAPDGIAIIGDYTPAAAGATTAGLDRIKTQAAAKAVAELVGRDPDVKAVLFEGVVVSTIYGPWQEWSKANGGMIWAFLDTPLEVCLKRIQERNGGKPIKEDQVADKHRTIARVRDKALADGETVRDIHWETALKDIKAVIENLG.

The protein belongs to the thymidylate kinase family. 5-hmdU DNA kinase subfamily.

The catalysed reaction is 5-hydroxymethyl-dUMP in DNA + ATP = 5-phosphomethyl-dUMP in DNA + ADP + H(+). Phosphorylates 5-hydroxymethyluracil (5hmdU) into 5-phosphomethyl-2'-deoxyuridine (5-PmdU) on DNA as a step in the pathway leading to thymidine hypermodifications in the viral genome. The phosphate is added internally to the DNA polymer. Also transfers glutamate to 5-pyrophosphoryloxymethyldeoxyuridine (5-PPmdU) to produce 5-Nalpha-glyutamylthymidine (Nalpha-GluT). As a final result of the pathway of hypermodification, 5-aminoethyl-2'-deoxyuridine (5-NedU) substitutes for about 30% of thymidines in the viral DNA. These modifications probably prevent degradation of viral genome by the host restriction-modification antiviral defense system. This chain is 5-hmdU DNA kinase, found in Pseudomonas phage M6.